The following is a 103-amino-acid chain: Thioredoxin-1 (103 aa).

Residues 2–103 (VTQFKTASEF…AIKQAIAANA (102 aa)) form the Thioredoxin domain. Residues cysteine 30 and cysteine 33 each act as nucleophile in the active site. Residues cysteine 30 and cysteine 33 are joined by a disulfide bond. Residues lysine 54, lysine 66, and lysine 96 each participate in a glycyl lysine isopeptide (Lys-Gly) (interchain with G-Cter in ubiquitin) cross-link.

This sequence belongs to the thioredoxin family. Monomer. Part of the heterodimeric LMA1 complex together with the proteinase inhibitor PBI2. Most of the thioredoxin of yeast is in this complex rather than the well-studied monomer. LMA1 binds to the ATPase SEC18. In terms of processing, reversible disulfide bond formation between Cys-30 and Cys-33, reverted by thioredoxin reductase TRR1 using NADPH as hydrogen donor.

It localises to the nucleus. The protein localises to the cytoplasm. It is found in the golgi apparatus membrane. Its subcellular location is the mitochondrion intermembrane space. Participates as a hydrogen donor in redox reactions through the reversible oxidation of its active center dithiol to a disulfide, accompanied by the transfer of 2 electrons and 2 protons. It is involved in many cellular processes, including deoxyribonucleotide synthesis, repair of oxidatively damaged proteins, protein folding, sulfur metabolism, and redox homeostasis. Thioredoxin-dependent enzymes include phosphoadenosine-phosphosulfate reductase MET16, alkyl-hydroperoxide reductase DOT5, thioredoxin peroxidases TSA1 and TSA2, alkyl hydroperoxide reductase AHP1, and peroxiredoxin HYR1. Thioredoxin is also involved in protection against reducing stress. As part of the LMA1 complex, it is involved in the facilitation of vesicle fusion such as homotypic vacuole and ER-derived COPII vesicle fusion with the Golgi. This activity does not require the redox mechanism. In Saccharomyces cerevisiae (strain ATCC 204508 / S288c) (Baker's yeast), this protein is Thioredoxin-1 (TRX1).